The sequence spans 671 residues: MVQYNFKRITVVPNGKEFVDIILSRTQRQTPTVVHKGYKINRLRQFYMRKVKYTQTNFHAKLSAIIDEFPRLEQIHPFYGDLLHVLYNKDHYKLALGQVNTARNLISKISKDYVKLLKYGDSLYRCKCLKVAALGRMCTVLKRITPSLAYLEQIRQHMARLPSIDPNTRTVLICGYPNVGKSSFMNKVTRADVDVQPYAFTTKSLFVGHTDYKYLRYQVIDTPGILDRPFEDRNIIEMCSITALAHLRAAVLFFLDISGSCGYTIAQQAALFHSIKSLFMNKPLVIVCNKTDLMPMENISEEDRKLIEEMKSEAMKTAMGASEEQVLLKMSTLTDEGVMSVKNAACERLLDQRVEAKMKSKKINDHLNRFHVAIPKPRDSIERLPCIPQVVLEAKAKEAAAMEKRKTEKDLEEENGGAGVYSASLKKNYILQHDEWKEDIMPEILDGHNVADFIDPDILQRLAELEREEGIREAGVEEADMEMDIEKLSDEQLKQLSEIRKKKAILIKNHRLKKTVAQNRSTVPRKFDKDKKYTTKRMGRELSAMGLDPSSAMDRARSKSRGRKRDRSEDAGNDAMDVDDEQQSNKKQRVRSKSRAMSISRSQSRPPAHEVVPGEGFKDSTQKLSAIKISNKSHKKRDKNARRGEADRVIPTLRPKHLFSGKRGKGKTDRR.

Residues 169–350 (RTVLICGYPN…VKNAACERLL (182 aa)) enclose the OBG-type G domain. GTP is bound by residues 175–182 (GYPNVGKS), 221–225 (DTPGI), and 289–292 (NKTD). Residues 516 to 671 (VAQNRSTVPR…KRGKGKTDRR (156 aa)) are disordered. Residues 595–605 (RAMSISRSQSR) show a composition bias toward polar residues. Composition is skewed to basic residues over residues 631–640 (NKSHKKRDKN) and 654–671 (RPKH…TDRR).

Belongs to the TRAFAC class OBG-HflX-like GTPase superfamily. OBG GTPase family. NOG subfamily.

The protein resides in the nucleus. The protein localises to the nucleolus. In terms of biological role, involved in the biogenesis of the 60S ribosomal subunit. The chain is Nucleolar GTP-binding protein 1 from Arabidopsis thaliana (Mouse-ear cress).